Reading from the N-terminus, the 271-residue chain is Thiazole synthase (271 aa).

The active-site Schiff-base intermediate with DXP is the K104. 1-deoxy-D-xylulose 5-phosphate contacts are provided by residues G165, 192–193, and 214–215; these read AG and NT.

Belongs to the ThiG family. In terms of assembly, homotetramer. Forms heterodimers with either ThiH or ThiS.

The protein resides in the cytoplasm. The enzyme catalyses [ThiS sulfur-carrier protein]-C-terminal-Gly-aminoethanethioate + 2-iminoacetate + 1-deoxy-D-xylulose 5-phosphate = [ThiS sulfur-carrier protein]-C-terminal Gly-Gly + 2-[(2R,5Z)-2-carboxy-4-methylthiazol-5(2H)-ylidene]ethyl phosphate + 2 H2O + H(+). It participates in cofactor biosynthesis; thiamine diphosphate biosynthesis. In terms of biological role, catalyzes the rearrangement of 1-deoxy-D-xylulose 5-phosphate (DXP) to produce the thiazole phosphate moiety of thiamine. Sulfur is provided by the thiocarboxylate moiety of the carrier protein ThiS. In vitro, sulfur can be provided by H(2)S. The protein is Thiazole synthase of Burkholderia mallei (strain ATCC 23344).